The sequence spans 119 residues: Protein SPIRAL1 (119 aa).

Over residues 1-11 (MGRGNSCGGGQ) the composition is skewed to gly residues. 2 disordered regions span residues 1–47 (MGRG…PPVT) and 85–105 (EGQN…HAAP). Pro residues predominate over residues 24–34 (APKPVPAPRPA).

This sequence belongs to the SPIRAL1 family. Ubiquitinated. Upon salt-stress induction, it is subject to proteasome-dependent degradation. In terms of tissue distribution, ubiquitous. High expression was associated with tissues undergoing rapid cell expansion, including the root elongation zone, hypocotyls of dark grown-seedlings, and cotyledons of light-grown seedlings.

Its subcellular location is the cytoplasm. The protein localises to the cytoskeleton. The protein resides in the phragmoplast. It is found in the spindle. In terms of biological role, required for directional control of cell elongation. Stabilizes growing ends of cortical microtubules and influences their dynamic properties. Acts redundantly with SP1Ls in maintaining the cortical microtubules organization essential for anisotropic cell growth. Plays a key role in salt stress-induced microtubules disassembly. This is Protein SPIRAL1 (SPR1) from Arabidopsis thaliana (Mouse-ear cress).